Reading from the N-terminus, the 648-residue chain is Phosphomethylpyrimidine synthase (648 aa).

Residues N253, M282, Y311, H347, 367 to 369 (SRG), 408 to 411 (DGLR), and E447 contribute to the substrate site. Zn(2+) is bound at residue H451. Y474 is a substrate binding site. Residue H515 participates in Zn(2+) binding. Positions 595, 598, and 603 each coordinate [4Fe-4S] cluster.

It belongs to the ThiC family. Homodimer. [4Fe-4S] cluster is required as a cofactor.

The enzyme catalyses 5-amino-1-(5-phospho-beta-D-ribosyl)imidazole + S-adenosyl-L-methionine = 4-amino-2-methyl-5-(phosphooxymethyl)pyrimidine + CO + 5'-deoxyadenosine + formate + L-methionine + 3 H(+). It participates in cofactor biosynthesis; thiamine diphosphate biosynthesis. Catalyzes the synthesis of the hydroxymethylpyrimidine phosphate (HMP-P) moiety of thiamine from aminoimidazole ribotide (AIR) in a radical S-adenosyl-L-methionine (SAM)-dependent reaction. In Burkholderia thailandensis (strain ATCC 700388 / DSM 13276 / CCUG 48851 / CIP 106301 / E264), this protein is Phosphomethylpyrimidine synthase.